We begin with the raw amino-acid sequence, 690 residues long: Glycine--tRNA ligase beta subunit (690 aa).

It belongs to the class-II aminoacyl-tRNA synthetase family. As to quaternary structure, tetramer of two alpha and two beta subunits.

Its subcellular location is the cytoplasm. The catalysed reaction is tRNA(Gly) + glycine + ATP = glycyl-tRNA(Gly) + AMP + diphosphate. The sequence is that of Glycine--tRNA ligase beta subunit from Desulfatibacillum aliphaticivorans.